The chain runs to 37 residues: Large ribosomal subunit protein bL36 (37 aa).

The protein belongs to the bacterial ribosomal protein bL36 family.

This chain is Large ribosomal subunit protein bL36, found in Acidovorax ebreus (strain TPSY) (Diaphorobacter sp. (strain TPSY)).